The following is a 60-amino-acid chain: Protein translocase subunit SecE (60 aa).

The Cytoplasmic portion of the chain corresponds to 1 to 31; sequence MFARLIRYFQEARAELARVTWPTREQVVEGT. The helical transmembrane segment at 32 to 52 threads the bilayer; sequence QAILLFTLAFMVILGLYDTVF. At 53-60 the chain is on the extracellular side; it reads RFLIGLLR.

This sequence belongs to the SecE/SEC61-gamma family. As to quaternary structure, component of the Sec protein translocase complex. Heterotrimer consisting of SecY, SecE and SecG subunits. The heterotrimers can form oligomers, although 1 heterotrimer is thought to be able to translocate proteins. Interacts with SecDF, and other proteins may be involved. The channel interacts with SecA via subunit SecY.

It is found in the cell inner membrane. Essential subunit of the protein translocation channel SecYEG. Clamps together the 2 halves of SecY. May contact the channel plug during translocation. The polypeptide is Protein translocase subunit SecE (Thermus thermophilus (strain ATCC 27634 / DSM 579 / HB8)).